A 161-amino-acid chain; its full sequence is Cytochrome c-type biogenesis protein CcmE (161 aa).

Over 1–8 (MNPVRKKR) the chain is Cytoplasmic. The helical; Signal-anchor for type II membrane protein transmembrane segment at 9–29 (LYIVLAILCGVSIAVALALTA) threads the bilayer. Topologically, residues 30–161 (LQENINLFYT…AKGYQQESAQ (132 aa)) are periplasmic. Residues H124 and Y128 each coordinate heme.

Belongs to the CcmE/CycJ family.

The protein resides in the cell inner membrane. Heme chaperone required for the biogenesis of c-type cytochromes. Transiently binds heme delivered by CcmC and transfers the heme to apo-cytochromes in a process facilitated by CcmF and CcmH. The sequence is that of Cytochrome c-type biogenesis protein CcmE from Ectopseudomonas mendocina (strain ymp) (Pseudomonas mendocina).